Here is an 859-residue protein sequence, read N- to C-terminus: DNA (cytosine-5)-methyltransferase 3B (859 aa).

The tract at residues 1–305 (MKGDSRHLNE…LATFNKLVSY (305 aa)) is interaction with DNMT1 and DNMT3A. The interval 25 to 226 (GNFSDQSSDT…RDGDSTEYQD (202 aa)) is disordered. The segment covering 85 to 94 (DRDDEVDDGN) has biased composition (acidic residues). The residue at position 96 (Ser96) is a Phosphoserine. Residue Lys102 forms a Glycyl lysine isopeptide (Lys-Gly) (interchain with G-Cter in SUMO2) linkage. Over residues 103 to 114 (LTRETKDTRTRS) the composition is skewed to basic and acidic residues. The residue at position 112 (Thr112) is a Phosphothreonine. Phosphoserine is present on Ser116. The span at 167-179 (SSSASTPWSSPAS) shows a compositional bias: low complexity. Polar residues predominate over residues 189–198 (KSVSTPSVDL). Positions 214–226 (AESRDGDSTEYQD) are enriched in basic and acidic residues. Residue Ser216 is modified to Phosphoserine. Residues 232 to 290 (IGDLVWGKIKGFSWWPAMVVSWKATSKRQAMPGMRWVQWFGDGKFSEISADKLVALGLF) form the PWWP domain. Positions 348 to 429 (KPTGIEGLKP…ESRERMASEV (82 aa)) are disordered. Composition is skewed to basic and acidic residues over residues 370–381 (RRSDSRNLEPRR) and 412–426 (GKDR…ERMA). The residue at position 415 (Arg415) is a Citrulline. Residues 428–560 (EVTNNKGNLE…LQDFFTTDPD (133 aa)) form the ADD domain. The segment at 439–469 (RCLSCGKKNPVSFHPLFEGGLCQSCRDRFLE) adopts a GATA-type; atypical zinc-finger fold. Residues 440-532 (CLSCGKKNPV…LQEPWSCYMC (93 aa)) are interaction with the PRC2/EED-EZH2 complex. The PHD-type; atypical zinc finger occupies 480–536 (QSYCTVCCEGRELLLCSNTSCCRCFCVECLEVLVGAGTAEDAKLQEPWSCYMCLPQR). Residues 581-859 (IRVLSLFDGI…APLKDYFACE (279 aa)) form the SAM-dependent MTase C5-type domain. S-adenosyl-L-methionine is bound by residues 588–592 (DGIAT) and Glu611. Residue Lys623 forms a Glycyl lysine isopeptide (Lys-Gly) (interchain with G-Cter in SUMO2) linkage. Position 633 to 635 (633 to 635 (DVR)) interacts with S-adenosyl-L-methionine. The active site involves Cys657. 838-840 (RSW) is a binding site for S-adenosyl-L-methionine.

The protein belongs to the class I-like SAM-binding methyltransferase superfamily. C5-methyltransferase family. In terms of assembly, interacts with CBX4, DNMT1, DNMT3A, SETDB1, UBE2I9, UBL1 and ZHX1. Interacts with SUV39H1 and BAZ2A/TIP5. Interacts with the PRC2/EED-EZH2 complex. Interacts with UHRF1. Post-translationally, sumoylated. In terms of processing, citrullinated by PADI4.

The protein resides in the nucleus. The catalysed reaction is a 2'-deoxycytidine in DNA + S-adenosyl-L-methionine = a 5-methyl-2'-deoxycytidine in DNA + S-adenosyl-L-homocysteine + H(+). With respect to regulation, activated by binding to the regulatory factor DNMT3L. In terms of biological role, required for genome-wide de novo methylation and is essential for the establishment of DNA methylation patterns during development. DNA methylation is coordinated with methylation of histones. May preferentially methylates nucleosomal DNA within the nucleosome core region. May function as transcriptional co-repressor by associating with CBX4 and independently of DNA methylation. Seems to be involved in gene silencing. In association with DNMT1 and via the recruitment of CTCFL/BORIS, involved in activation of BAG1 gene expression by modulating dimethylation of promoter histone H3 at H3K4 and H3K9. Functions as a transcriptional corepressor by associating with ZHX1. Required for DUX4 silencing in somatic cells. The sequence is that of DNA (cytosine-5)-methyltransferase 3B (Dnmt3b) from Mus musculus (Mouse).